The sequence spans 86 residues: Toxin Aam2 (86 aa).

The N-terminal stretch at 1-20 (MNYLITISLALLLMTGVASG) is a signal peptide. The LCN-type CS-alpha/beta domain occupies 22–84 (RDGYIADAGN…VPIKVPGKCN (63 aa)). 4 disulfide bridges follow: Cys-32-Cys-83, Cys-36-Cys-56, Cys-42-Cys-66, and Cys-46-Cys-68. Asn-84 bears the Asparagine amide mark.

This sequence belongs to the long (4 C-C) scorpion toxin superfamily. Sodium channel inhibitor family. Alpha subfamily. In terms of tissue distribution, expressed by the venom gland.

It localises to the secreted. In terms of biological role, alpha toxins bind voltage-independently at site-3 of sodium channels (Nav) and inhibit the inactivation of the activated channels, thereby blocking neuronal transmission. The polypeptide is Toxin Aam2 (Androctonus amoreuxi (African fattail scorpion)).